We begin with the raw amino-acid sequence, 273 residues long: MSRIARTFAGLKAQGRKALIPYVTAGFPFPDITPELMHAFVAGGADVIELGVPFSDPSADGPVIQKAGDKALAAGIGMVQVLDMVRTFRTRDASTPVVLMGYANPVERYNQKHDRHDGKSAFVLDAAAAGVDGVLIVDYPPEECEAFAAELKSAGLDLIFLLAPTSTDERMQQVARVASGYVYYVSLKGVTGSGALDTGAVEAMLPRIRAHVQVPVGVGFGIRDAATARTIGQVADAVVIGSKIIQLIDEQPRDQVGPVAQKFLCEIRTALDN.

Catalysis depends on proton acceptor residues glutamate 49 and aspartate 60.

This sequence belongs to the TrpA family. In terms of assembly, tetramer of two alpha and two beta chains.

It catalyses the reaction (1S,2R)-1-C-(indol-3-yl)glycerol 3-phosphate + L-serine = D-glyceraldehyde 3-phosphate + L-tryptophan + H2O. It participates in amino-acid biosynthesis; L-tryptophan biosynthesis; L-tryptophan from chorismate: step 5/5. The alpha subunit is responsible for the aldol cleavage of indoleglycerol phosphate to indole and glyceraldehyde 3-phosphate. The chain is Tryptophan synthase alpha chain from Albidiferax ferrireducens (strain ATCC BAA-621 / DSM 15236 / T118) (Rhodoferax ferrireducens).